Here is a 586-residue protein sequence, read N- to C-terminus: 3-hydroxy-3-methylglutaryl-coenzyme A reductase 3 (586 aa).

2 consecutive transmembrane segments (helical) span residues 36-59 (PSDYSLPLSLYLANALVFSLFFSV) and 87-107 (ALICLVASVIYLLGFFGIGFV). The linker stretch occupies residues 108–170 (HSFSRASTDS…STTTTSTLSD (63 aa)). Catalytic regions lie at residues 171-586 (DDEQ…KITF) and 172-586 (DEQI…KITF). Active-site charge relay system residues include Glu265, Lys397, and Asp473. The Proton donor role is filled by His571. A glycan (N-linked (GlcNAc...) asparagine) is linked at Asn575.

Belongs to the HMG-CoA reductase family.

The protein resides in the endoplasmic reticulum membrane. It is found in the mitochondrion membrane. It localises to the plastid membrane. The catalysed reaction is (R)-mevalonate + 2 NADP(+) + CoA = (3S)-3-hydroxy-3-methylglutaryl-CoA + 2 NADPH + 2 H(+). It participates in metabolic intermediate biosynthesis; (R)-mevalonate biosynthesis; (R)-mevalonate from acetyl-CoA: step 3/3. In terms of biological role, catalyzes the synthesis of mevalonate. The specific precursor of all isoprenoid compounds present in plants. The polypeptide is 3-hydroxy-3-methylglutaryl-coenzyme A reductase 3 (HMGR3) (Hevea brasiliensis (Para rubber tree)).